The following is a 267-amino-acid chain: MAAGEPRDGGGYYFRFLPHRTFSSLSAREITSRLRQWSMLGRIQAQAFSFDQTFQPYQKDDFVMAFFKDPNVIPNLQLLSDSSGQWTTLGSEVKKIEAINVPCTQLSMSFFQRLYDENIVRESGHIVKCLDSFCDPFLISDELRKVLLMEDSEKYEVFSPVEREEFLFCLFKHLCLGGSLCQYEDVLKPYLETAKLIYKDLVSVRKHPRTKEIQITSSVFKVKAYDSVGVCYPSPKEHEQTFSYFVVDPIKRHVNVLYHCYGVGHMA.

It belongs to the CFAP300 family. In terms of assembly, interacts with DNAAF2. Expressed in the left-right organiser (LRO) node at 8.25 dpc.

Its subcellular location is the cytoplasm. The protein resides in the cytoskeleton. It localises to the cilium axoneme. Cilium- and flagellum-specific protein that plays a role in axonemal structure organization and motility. May play a role in outer and inner dynein arm assembly. This Mus musculus (Mouse) protein is Cilia- and flagella-associated protein 300.